The following is a 136-amino-acid chain: Small ribosomal subunit protein uS9 (136 aa).

This sequence belongs to the universal ribosomal protein uS9 family.

The chain is Small ribosomal subunit protein uS9 from Borrelia duttonii (strain Ly).